The sequence spans 421 residues: Gamma-glutamyl phosphate reductase (421 aa).

Belongs to the gamma-glutamyl phosphate reductase family.

It is found in the cytoplasm. The catalysed reaction is L-glutamate 5-semialdehyde + phosphate + NADP(+) = L-glutamyl 5-phosphate + NADPH + H(+). It functions in the pathway amino-acid biosynthesis; L-proline biosynthesis; L-glutamate 5-semialdehyde from L-glutamate: step 2/2. Functionally, catalyzes the NADPH-dependent reduction of L-glutamate 5-phosphate into L-glutamate 5-semialdehyde and phosphate. The product spontaneously undergoes cyclization to form 1-pyrroline-5-carboxylate. The polypeptide is Gamma-glutamyl phosphate reductase (Leifsonia xyli subsp. xyli (strain CTCB07)).